A 245-amino-acid polypeptide reads, in one-letter code: PF03932 family protein CutC (245 aa).

It belongs to the CutC family.

The protein resides in the cytoplasm. The polypeptide is PF03932 family protein CutC (Sinorhizobium medicae (strain WSM419) (Ensifer medicae)).